The primary structure comprises 370 residues: Glutamate 5-kinase (370 aa).

K17 contributes to the ATP binding site. The substrate site is built by S57, D144, and N156. ATP contacts are provided by residues 176–177 and 220–226; these read SD and TGGMVSK. Residues 282-360 form the PUA domain; sequence SGTLTLDDGA…SDLPAEMRRP (79 aa).

The protein belongs to the glutamate 5-kinase family.

It localises to the cytoplasm. It catalyses the reaction L-glutamate + ATP = L-glutamyl 5-phosphate + ADP. Its pathway is amino-acid biosynthesis; L-proline biosynthesis; L-glutamate 5-semialdehyde from L-glutamate: step 1/2. In terms of biological role, catalyzes the transfer of a phosphate group to glutamate to form L-glutamate 5-phosphate. In Mycolicibacterium gilvum (strain PYR-GCK) (Mycobacterium gilvum (strain PYR-GCK)), this protein is Glutamate 5-kinase.